The primary structure comprises 449 residues: FAD-linked oxidoreductase janO (449 aa).

Residues Pro-32 to Leu-203 enclose the FAD-binding PCMH-type domain.

It belongs to the oxygen-dependent FAD-linked oxidoreductase family. The cofactor is FAD.

Its pathway is secondary metabolite biosynthesis. In terms of biological role, FAD-linked oxidoreductase; part of the gene cluster that mediates the biosynthesis of the indole diterpenes janthitremanes such as shearinine K or shearinine A. The geranylgeranyl diphosphate (GGPP) synthase janG catalyzes the first step in janthitremane biosynthesis via conversion of farnesyl pyrophosphate and isopentyl pyrophosphate into geranylgeranyl pyrophosphate (GGPP). Condensation of indole-3-glycerol phosphate with GGPP by the prenyl transferase janC then forms 3-geranylgeranylindole (3-GGI). Epoxidation by the FAD-dependent monooxygenase janM leads to a epoxidized-GGI that is substrate of the terpene cyclase janB for cyclization to yield paspaline. Paspaline is subsequently converted to 13-desoxypaspaline by the cytochrome P450 monooxygenase janP, via beta-PC-M6 in a series of alpha-face oxidations. The cytochrome P450 monooxygenase janQ is proposed to carry out sequential beta-face oxidation steps at C-7 and C-13 of 13-desoxypaspaline to form paspalicine and paspalinine respectively. The indole diterpene prenyltransferase janD may then convert paspalinine into shearinine K which is substrate of janO and/or additional enzymes for oxidation and cyclization to generate shearinine A. In Penicillium janthinellum (Penicillium vitale), this protein is FAD-linked oxidoreductase janO.